Here is a 115-residue protein sequence, read N- to C-terminus: Large ribosomal subunit protein bL31B (115 aa).

The protein belongs to the bacterial ribosomal protein bL31 family. Type B subfamily. As to quaternary structure, part of the 50S ribosomal subunit.

This is Large ribosomal subunit protein bL31B from Polynucleobacter necessarius subsp. necessarius (strain STIR1).